The sequence spans 156 residues: 6,7-dimethyl-8-ribityllumazine synthase (156 aa).

5-amino-6-(D-ribitylamino)uracil-binding positions include Phe22, 57-59 (AYE), and 81-83 (TVI). 86-87 (GT) is a binding site for (2S)-2-hydroxy-3-oxobutyl phosphate. The active-site Proton donor is the His89. 5-amino-6-(D-ribitylamino)uracil is bound at residue Phe114. Residue Arg128 coordinates (2S)-2-hydroxy-3-oxobutyl phosphate.

This sequence belongs to the DMRL synthase family. Forms an icosahedral capsid composed of 60 subunits, arranged as a dodecamer of pentamers.

It carries out the reaction (2S)-2-hydroxy-3-oxobutyl phosphate + 5-amino-6-(D-ribitylamino)uracil = 6,7-dimethyl-8-(1-D-ribityl)lumazine + phosphate + 2 H2O + H(+). Its pathway is cofactor biosynthesis; riboflavin biosynthesis; riboflavin from 2-hydroxy-3-oxobutyl phosphate and 5-amino-6-(D-ribitylamino)uracil: step 1/2. Catalyzes the formation of 6,7-dimethyl-8-ribityllumazine by condensation of 5-amino-6-(D-ribitylamino)uracil with 3,4-dihydroxy-2-butanone 4-phosphate. This is the penultimate step in the biosynthesis of riboflavin. This is 6,7-dimethyl-8-ribityllumazine synthase from Yersinia pseudotuberculosis serotype O:1b (strain IP 31758).